The sequence spans 592 residues: Beta-fructofuranosidase, insoluble isoenzyme 2 (592 aa).

The N-terminal stretch at 1 to 40 is a signal peptide; that stretch reads MLIRCFHIKMALVTCFHSMLFLSAVVFIFSLDVNIRGVEA. Residue aspartate 75 is part of the active site. Asparagine 171, asparagine 195, asparagine 310, asparagine 347, and asparagine 568 each carry an N-linked (GlcNAc...) asparagine glycan.

It belongs to the glycosyl hydrolase 32 family.

Its subcellular location is the secreted. The protein resides in the cell wall. It catalyses the reaction Hydrolysis of terminal non-reducing beta-D-fructofuranoside residues in beta-D-fructofuranosides.. In terms of biological role, may play an important role in phloem unloading and in stress response. This chain is Beta-fructofuranosidase, insoluble isoenzyme 2 (INV2), found in Daucus carota (Wild carrot).